Consider the following 180-residue polypeptide: Adenine phosphoribosyltransferase (180 aa).

This sequence belongs to the purine/pyrimidine phosphoribosyltransferase family. As to quaternary structure, homodimer.

The protein resides in the cytoplasm. It catalyses the reaction AMP + diphosphate = 5-phospho-alpha-D-ribose 1-diphosphate + adenine. It functions in the pathway purine metabolism; AMP biosynthesis via salvage pathway; AMP from adenine: step 1/1. Its function is as follows. Catalyzes a salvage reaction resulting in the formation of AMP, that is energically less costly than de novo synthesis. The polypeptide is Adenine phosphoribosyltransferase (Mycoplasma genitalium (strain ATCC 33530 / DSM 19775 / NCTC 10195 / G37) (Mycoplasmoides genitalium)).